Here is a 202-residue protein sequence, read N- to C-terminus: Histone chaperone ASF1B (202 aa).

Residues Met-1–Asn-156 are interaction with histone H3 and CHAF1B. The residue at position 198 (Ser-198) is a Phosphoserine; by TLK2.

This sequence belongs to the ASF1 family. As to quaternary structure, interacts with histone H3 (via C-terminus), including histone H3.1, H3.2 and H3.3, and histone H4; the interaction with H3 is direct. Interacts with the CHAF1A, CHAF1B and RBBP4 subunits of the CAF-1 complex. Interacts with HAT1, NASP and TAF1. Found in a soluble complex with NASP and histones H3 and H4; the interaction with NASP is probably indirect and mediated by H3-H4. Interacts with CDAN1. Found in a cytosolic complex with CDAN1, ASF1A, IPO4 and histones H3.1 and H4. Interacts with CREBBP. In terms of processing, phosphorylated by TLK1 and TLK2.

Its subcellular location is the nucleus. The protein localises to the cytoplasm. It localises to the cytosol. Histone chaperone that facilitates histone deposition and histone exchange and removal during nucleosome assembly and disassembly. Cooperates with chromatin assembly factor 1 (CAF-1) to promote replication-dependent chromatin assembly. Also involved in the nuclear import of the histone H3-H4 dimer together with importin-4 (IPO4): specifically recognizes and binds newly synthesized histones with the monomethylation of H3 'Lys-9' (H3K9me1) and diacetylation at 'Lys-5' and 'Lys-12' of H4 (H4K5ac and H4K12ac) marks in the cytosol. Does not participate in replication-independent nucleosome deposition which is mediated by ASF1A and HIRA. Required for gonad development. The protein is Histone chaperone ASF1B (ASF1B) of Bos taurus (Bovine).